Consider the following 194-residue polypeptide: Imidazoleglycerol-phosphate dehydratase (194 aa).

It belongs to the imidazoleglycerol-phosphate dehydratase family.

It localises to the cytoplasm. The catalysed reaction is D-erythro-1-(imidazol-4-yl)glycerol 3-phosphate = 3-(imidazol-4-yl)-2-oxopropyl phosphate + H2O. It participates in amino-acid biosynthesis; L-histidine biosynthesis; L-histidine from 5-phospho-alpha-D-ribose 1-diphosphate: step 6/9. The protein is Imidazoleglycerol-phosphate dehydratase of Chlorobaculum tepidum (strain ATCC 49652 / DSM 12025 / NBRC 103806 / TLS) (Chlorobium tepidum).